Reading from the N-terminus, the 401-residue chain is Argininosuccinate synthase (401 aa).

ATP is bound at residue 8-16; it reads AYSGGLDTS. Tyrosine 87 lines the L-citrulline pocket. Position 117 (glycine 117) interacts with ATP. The L-aspartate site is built by threonine 119, asparagine 123, and aspartate 124. Asparagine 123 is an L-citrulline binding site. L-citrulline-binding residues include arginine 127, serine 175, glutamate 259, and tyrosine 271.

It belongs to the argininosuccinate synthase family. Type 1 subfamily. Homotetramer.

It is found in the cytoplasm. It carries out the reaction L-citrulline + L-aspartate + ATP = 2-(N(omega)-L-arginino)succinate + AMP + diphosphate + H(+). Its pathway is amino-acid biosynthesis; L-arginine biosynthesis; L-arginine from L-ornithine and carbamoyl phosphate: step 2/3. The sequence is that of Argininosuccinate synthase from Paenarthrobacter aurescens (strain TC1).